The chain runs to 570 residues: Protein FAM227A (570 aa).

The segment covering 87–99 has biased composition (basic and acidic residues); it reads LREKTRSSPEDKV. 3 disordered regions span residues 87–112, 336–374, and 519–570; these read LREK…CKGS, PAQS…QNTA, and KAAD…TSKP. A Phosphotyrosine modification is found at Y343. The segment covering 345 to 362 has biased composition (polar residues); that stretch reads PQSSSANSPSEKTSSAKQ. Residues S348 and S349 each carry the phosphoserine modification. Composition is skewed to basic and acidic residues over residues 363 to 374 and 540 to 562; these read NSEKSLRMQNTA and SPDK…EVEH.

This sequence belongs to the FAM227 family.

The sequence is that of Protein FAM227A (FAM227A) from Homo sapiens (Human).